Consider the following 457-residue polypeptide: Chromosomal replication initiator protein DnaA (457 aa).

Residues 1–81 (MERDLSQLWQ…NNTDLVIKVQ (81 aa)) form a domain I, interacts with DnaA modulators region. The tract at residues 81–119 (QEGSKPAARKVVAQQEIANTPVQHSAPMPENEPQAAFRS) is domain II. Positions 120–337 (NLNQHHLFEN…GALNRVHANA (218 aa)) are domain III, AAA+ region. 4 residues coordinate ATP: G165, G167, K168, and T169. The domain IV, binds dsDNA stretch occupies residues 338-457 (DFTGKAITID…WSNLIRTLSA (120 aa)).

This sequence belongs to the DnaA family. As to quaternary structure, oligomerizes as a right-handed, spiral filament on DNA at oriC.

The protein resides in the cytoplasm. Functionally, plays an essential role in the initiation and regulation of chromosomal replication. ATP-DnaA binds to the origin of replication (oriC) to initiate formation of the DNA replication initiation complex once per cell cycle. Binds the DnaA box (a 9 base pair repeat at the origin) and separates the double-stranded (ds)DNA. Forms a right-handed helical filament on oriC DNA; dsDNA binds to the exterior of the filament while single-stranded (ss)DNA is stabiized in the filament's interior. The ATP-DnaA-oriC complex binds and stabilizes one strand of the AT-rich DNA unwinding element (DUE), permitting loading of DNA polymerase. After initiation quickly degrades to an ADP-DnaA complex that is not apt for DNA replication. Binds acidic phospholipids. The sequence is that of Chromosomal replication initiator protein DnaA from Mannheimia succiniciproducens (strain KCTC 0769BP / MBEL55E).